Consider the following 752-residue polypeptide: DNA topoisomerase 4 subunit A (752 aa).

In terms of domain architecture, Topo IIA-type catalytic spans 31–494 (LPFIGDGLKP…EAKAMSEHDM (464 aa)). Y120 functions as the O-(5'-phospho-DNA)-tyrosine intermediate in the catalytic mechanism. The segment at 472–492 (YGDDRRSPLREREEAKAMSEH) is disordered. A compositionally biased stretch (basic and acidic residues) spans 473-492 (GDDRRSPLREREEAKAMSEH).

Belongs to the type II topoisomerase GyrA/ParC subunit family. ParC type 1 subfamily. Heterotetramer composed of ParC and ParE.

It is found in the cell membrane. It carries out the reaction ATP-dependent breakage, passage and rejoining of double-stranded DNA.. Functionally, topoisomerase IV is essential for chromosome segregation. It relaxes supercoiled DNA. Performs the decatenation events required during the replication of a circular DNA molecule. The protein is DNA topoisomerase 4 subunit A of Salmonella typhimurium (strain LT2 / SGSC1412 / ATCC 700720).